The following is a 266-amino-acid chain: Putative carbamate hydrolase RutD (266 aa).

Belongs to the AB hydrolase superfamily. Hydrolase RutD family.

The enzyme catalyses carbamate + 2 H(+) = NH4(+) + CO2. Involved in pyrimidine catabolism. May facilitate the hydrolysis of carbamate, a reaction that can also occur spontaneously. This Escherichia coli O139:H28 (strain E24377A / ETEC) protein is Putative carbamate hydrolase RutD.